A 459-amino-acid chain; its full sequence is Taurine--pyruvate aminotransferase (459 aa).

Lys287 bears the N6-(pyridoxal phosphate)lysine mark.

Belongs to the class-III pyridoxal-phosphate-dependent aminotransferase family. The cofactor is pyridoxal 5'-phosphate.

It is found in the cytoplasm. The catalysed reaction is taurine + pyruvate = sulfoacetaldehyde + L-alanine. The protein operates within organosulfur degradation; taurine degradation via aerobic pathway; acetyl phosphate and sulfite from taurine: step 1/2. Its function is as follows. Catalyzes the degradation of taurine into alanine and sulfoacetaldehyde. This is Taurine--pyruvate aminotransferase from Rhodobacter capsulatus (strain ATCC BAA-309 / NBRC 16581 / SB1003).